The primary structure comprises 425 residues: uncharacterized protein (425 aa).

This sequence to K.pneumoniae SorE.

This is an uncharacterized protein from Escherichia coli (strain K12).